Here is an 863-residue protein sequence, read N- to C-terminus: Leucine--tRNA ligase (863 aa).

A 'HIGH' region motif is present at residues 42–52; that stretch reads PYPSGRLHMGH. Positions 622 to 626 match the 'KMSKS' region motif; sequence KMSKS. K625 serves as a coordination point for ATP.

It belongs to the class-I aminoacyl-tRNA synthetase family.

It is found in the cytoplasm. It catalyses the reaction tRNA(Leu) + L-leucine + ATP = L-leucyl-tRNA(Leu) + AMP + diphosphate. The protein is Leucine--tRNA ligase of Shewanella sediminis (strain HAW-EB3).